A 155-amino-acid polypeptide reads, in one-letter code: Small ribosomal subunit protein uS7c (155 aa).

The protein belongs to the universal ribosomal protein uS7 family. Part of the 30S ribosomal subunit.

It is found in the plastid. It localises to the chloroplast. Its function is as follows. One of the primary rRNA binding proteins, it binds directly to 16S rRNA where it nucleates assembly of the head domain of the 30S subunit. In Chaetosphaeridium globosum (Charophycean green alga), this protein is Small ribosomal subunit protein uS7c (rps7).